An 854-amino-acid chain; its full sequence is Putative COX1/OXI3 intron 2 protein (854 aa).

Positions 329 to 613 (LSKDINTNMF…EGVSFLGYDV (285 aa)) constitute a Reverse transcriptase domain.

The protein resides in the mitochondrion. In Saccharomyces cerevisiae (strain ATCC 204508 / S288c) (Baker's yeast), this protein is Putative COX1/OXI3 intron 2 protein (AI2).